The following is a 273-amino-acid chain: Dermonecrotic toxin LhSicTox-alphaIA2biv (273 aa).

The active site involves histidine 5. Mg(2+) contacts are provided by glutamate 25 and aspartate 27. The active-site Nucleophile is histidine 41. 2 disulfide bridges follow: cysteine 45/cysteine 51 and cysteine 47/cysteine 190. Aspartate 85 lines the Mg(2+) pocket.

This sequence belongs to the arthropod phospholipase D family. Class II subfamily. The cofactor is Mg(2+). In terms of tissue distribution, expressed by the venom gland.

It localises to the secreted. The catalysed reaction is an N-(acyl)-sphingosylphosphocholine = an N-(acyl)-sphingosyl-1,3-cyclic phosphate + choline. The enzyme catalyses an N-(acyl)-sphingosylphosphoethanolamine = an N-(acyl)-sphingosyl-1,3-cyclic phosphate + ethanolamine. It catalyses the reaction a 1-acyl-sn-glycero-3-phosphocholine = a 1-acyl-sn-glycero-2,3-cyclic phosphate + choline. It carries out the reaction a 1-acyl-sn-glycero-3-phosphoethanolamine = a 1-acyl-sn-glycero-2,3-cyclic phosphate + ethanolamine. In terms of biological role, dermonecrotic toxins cleave the phosphodiester linkage between the phosphate and headgroup of certain phospholipids (sphingolipid and lysolipid substrates), forming an alcohol (often choline) and a cyclic phosphate. This toxin acts on sphingomyelin (SM). It may also act on ceramide phosphoethanolamine (CPE), lysophosphatidylcholine (LPC) and lysophosphatidylethanolamine (LPE), but not on lysophosphatidylserine (LPS), and lysophosphatidylglycerol (LPG). It acts by transphosphatidylation, releasing exclusively cyclic phosphate products as second products. Induces dermonecrosis, hemolysis, increased vascular permeability, edema, inflammatory response, and platelet aggregation. This chain is Dermonecrotic toxin LhSicTox-alphaIA2biv, found in Loxosceles hirsuta (Recluse spider).